A 204-amino-acid polypeptide reads, in one-letter code: Holliday junction branch migration complex subunit RuvA (204 aa).

The segment at M1 to R64 is domain I. The interval T65 to P143 is domain II. Residues A144–E153 form a flexible linker region. The domain III stretch occupies residues E153–G204.

The protein belongs to the RuvA family. As to quaternary structure, homotetramer. Forms an RuvA(8)-RuvB(12)-Holliday junction (HJ) complex. HJ DNA is sandwiched between 2 RuvA tetramers; dsDNA enters through RuvA and exits via RuvB. An RuvB hexamer assembles on each DNA strand where it exits the tetramer. Each RuvB hexamer is contacted by two RuvA subunits (via domain III) on 2 adjacent RuvB subunits; this complex drives branch migration. In the full resolvosome a probable DNA-RuvA(4)-RuvB(12)-RuvC(2) complex forms which resolves the HJ.

The protein resides in the cytoplasm. The RuvA-RuvB-RuvC complex processes Holliday junction (HJ) DNA during genetic recombination and DNA repair, while the RuvA-RuvB complex plays an important role in the rescue of blocked DNA replication forks via replication fork reversal (RFR). RuvA specifically binds to HJ cruciform DNA, conferring on it an open structure. The RuvB hexamer acts as an ATP-dependent pump, pulling dsDNA into and through the RuvAB complex. HJ branch migration allows RuvC to scan DNA until it finds its consensus sequence, where it cleaves and resolves the cruciform DNA. This Halorhodospira halophila (strain DSM 244 / SL1) (Ectothiorhodospira halophila (strain DSM 244 / SL1)) protein is Holliday junction branch migration complex subunit RuvA.